The chain runs to 170 residues: M-agglutinin (170 aa).

A signal peptide spans 1–24 (MNLKKIAIASSVFAGITMALTCHA).

In terms of biological role, this protein is a non-fimbrial hemagglutinin that is specific for blood group M. The protein is M-agglutinin (bmaE) of Escherichia coli.